A 107-amino-acid chain; its full sequence is Nucleoid-associated protein Lferr_1592 (107 aa).

Belongs to the YbaB/EbfC family. Homodimer.

It localises to the cytoplasm. Its subcellular location is the nucleoid. In terms of biological role, binds to DNA and alters its conformation. May be involved in regulation of gene expression, nucleoid organization and DNA protection. The sequence is that of Nucleoid-associated protein Lferr_1592 from Acidithiobacillus ferrooxidans (strain ATCC 53993 / BNL-5-31) (Leptospirillum ferrooxidans (ATCC 53993)).